The chain runs to 375 residues: DNA replication and repair protein RecF (375 aa).

Residue 30-37 (GNNAQGKS) coordinates ATP.

Belongs to the RecF family.

The protein localises to the cytoplasm. Its function is as follows. The RecF protein is involved in DNA metabolism; it is required for DNA replication and normal SOS inducibility. RecF binds preferentially to single-stranded, linear DNA. It also seems to bind ATP. In Microcystis aeruginosa (strain NIES-843 / IAM M-2473), this protein is DNA replication and repair protein RecF.